The primary structure comprises 357 residues: 4-hydroxyphenylpyruvate dioxygenase (357 aa).

VOC domains follow at residues glycine 12–arginine 129 and isoleucine 158–glutamate 313. Positions 161, 240, and 322 each coordinate Fe cation.

It belongs to the 4HPPD family. Homotetramer. Fe cation is required as a cofactor.

It carries out the reaction 3-(4-hydroxyphenyl)pyruvate + O2 = homogentisate + CO2. The protein operates within amino-acid degradation; L-phenylalanine degradation; acetoacetate and fumarate from L-phenylalanine: step 3/6. This chain is 4-hydroxyphenylpyruvate dioxygenase (hpd), found in Pseudomonas sp. (strain P.J. 874).